A 176-amino-acid chain; its full sequence is Tubulin polymerization-promoting protein family member 3 (176 aa).

The residue at position 2 (A2) is an N-acetylalanine. The tract at residues 132–152 is disordered; it reads TGSHKERFDESGKGKGIAGRQ. A compositionally biased stretch (basic and acidic residues) spans 134–144; sequence SHKERFDESGK.

Belongs to the TPPP family.

It localises to the cytoplasm. The protein localises to the cytoskeleton. Functionally, regulator of microtubule dynamic that has microtubule bundling activity. Required for embryo implantation; possibly by regulating beta-catenin. Also required for decidualization via regulation of beta-catenin. The sequence is that of Tubulin polymerization-promoting protein family member 3 from Mus musculus (Mouse).